Consider the following 609-residue polypeptide: PTS system beta-glucoside-specific EIIBCA component (609 aa).

The PTS EIIB type-1 domain maps to 1–86; that stretch reads MDYDKLSKDI…VRHSNLSDEK (86 aa). Cys26 functions as the Phosphocysteine intermediate; for EIIB activity in the catalytic mechanism. The 357-residue stretch at 103-459 folds into the PTS EIIC type-1 domain; that stretch reads DVISGVFTPI…GSQQPAVHEG (357 aa). Helical transmembrane passes span 112–132, 141–161, 174–194, 202–222, 246–266, 281–301, 321–341, 351–371, 379–399, and 412–432; these read ILPA…AVTF, VHVI…LLLA, VAAA…LGAG, LPVT…SIWI, FTLL…GAIL, AGLV…MTGM, LLPA…AVFL, LALT…MYGV, FAAA…TGVA, and IPVF…IAFA. Residues 480-584 enclose the PTS EIIA type-1 domain; that stretch reads DGVFSAGVMG…DVITPVIVTN (105 aa). Residue His532 is the Tele-phosphohistidine intermediate; for EIIA activity of the active site.

The protein localises to the cell membrane. Its function is as follows. The phosphoenolpyruvate-dependent sugar phosphotransferase system (sugar PTS), a major carbohydrate active -transport system, catalyzes the phosphorylation of incoming sugar substrates concomitantly with their translocation across the cell membrane. This system is involved in beta-glucoside transport. This is PTS system beta-glucoside-specific EIIBCA component (bglP) from Bacillus subtilis (strain 168).